Here is a 591-residue protein sequence, read N- to C-terminus: MSDSDPKPTAAKGAAPTSIPNSTRNPNPTPPNPNPNPNPISTPAPTPTATPSPPIASSSNNGNNSTRSTNIDTNNNTNNAFFQAQQRIAARREAREAAAAARQATQQSASRLRARIAASQSPLLRRLGTSTLSLWDTLTSREGTRPAFRVGQVDAELLDEELVELLRGQVREALRYVGGGGGGGGGGGGGGVGSGVAQDWEAEISLALRAVLFKLTVWDHDATYGAALQNLKYTDARRDGPALAPPSRWQKALYGLVTVGGRYLWAKWEDWLLEQDDGFEGPSPRVKRLARWTSALSTLHASAALVSFLVFLLHGRYRTLLDRLLRMRLAPPTSQVSREVSFEYLNRQLVWHAFTEFLLFVLPLVGINRWRRWLARTWRRTKKIMTADADGGAGDKKGEYSFLPERTCAICYRDQNSASSETELLAAASGGVVGSAQTDITNPYEAIPCGCTYCFVCLATRIEREEGEGWPCLRCGELIKECKPWNGDVLEEPQVKSSPATTKTVVFADDVKAPSDHEEEENEEEEEQQGELGENEGESSQVLVEADPDGGLNDLRPETPSVSSDQADDSRGSESEDYEAEEDGLDEDPES.

The tract at residues 1 to 78 (MSDSDPKPTA…TNIDTNNNTN (78 aa)) is disordered. Residues 1–148 (MSDSDPKPTA…TSREGTRPAF (148 aa)) are Peroxisomal matrix-facing. The segment covering 7–26 (KPTAAKGAAPTSIPNSTRNP) has biased composition (low complexity). Over residues 27–54 (NPTPPNPNPNPNPISTPAPTPTATPSPP) the composition is skewed to pro residues. Residues 55–78 (IASSSNNGNNSTRSTNIDTNNNTN) are compositionally biased toward low complexity. The chain crosses the membrane as a helical span at residues 149–175 (RVGQVDAELLDEELVELLRGQVREALR). At 176 to 196 (YVGGGGGGGGGGGGGGVGSGV) the chain is on the cytoplasmic side. Residues 197 to 222 (AQDWEAEISLALRAVLFKLTVWDHDA) form a helical membrane-spanning segment. Topologically, residues 223-246 (TYGAALQNLKYTDARRDGPALAPP) are peroxisomal matrix. The helical transmembrane segment at 247–273 (SRWQKALYGLVTVGGRYLWAKWEDWLL) threads the bilayer. Over 274 to 283 (EQDDGFEGPS) the chain is Cytoplasmic. A helical transmembrane segment spans residues 284–314 (PRVKRLARWTSALSTLHASAALVSFLVFLLH). Residues 315–341 (GRYRTLLDRLLRMRLAPPTSQVSREVS) are Peroxisomal matrix-facing. Residues 342–365 (FEYLNRQLVWHAFTEFLLFVLPLV) traverse the membrane as a helical segment. The Cytoplasmic portion of the chain corresponds to 366–591 (GINRWRRWLA…EDGLDEDPES (226 aa)). Residues cysteine 408, cysteine 411, cysteine 449, cysteine 451, cysteine 454, cysteine 457, cysteine 472, and cysteine 475 each contribute to the Zn(2+) site. Residues 408-475 (CAICYRDQNS…EGEGWPCLRC (68 aa)) form an RING-type; atypical zinc finger. Residues 512 to 591 (KAPSDHEEEE…EDGLDEDPES (80 aa)) are disordered. 2 stretches are compositionally biased toward acidic residues: residues 517 to 537 (HEEE…ENEG) and 575 to 591 (SEDY…DPES).

It belongs to the pex2/pex10/pex12 family. As to quaternary structure, component of the PEX2-PEX10-PEX12 retrotranslocation channel, composed of PEX2, PEX10 and PEX12.

The protein localises to the peroxisome membrane. The enzyme catalyses [E2 ubiquitin-conjugating enzyme]-S-ubiquitinyl-L-cysteine + [acceptor protein]-L-cysteine = [E2 ubiquitin-conjugating enzyme]-L-cysteine + [acceptor protein]-S-ubiquitinyl-L-cysteine.. It participates in protein modification; protein ubiquitination. Functionally, E3 ubiquitin-protein ligase component of a retrotranslocation channel required for peroxisome organization by mediating export of the PEX5 receptor from peroxisomes to the cytosol, thereby promoting PEX5 recycling. The retrotranslocation channel is composed of PEX2, PEX10 and PEX12; each subunit contributing transmembrane segments that coassemble into an open channel that specifically allows the passage of PEX5 through the peroxisomal membrane. PEX2 also regulates peroxisome organization by acting as a E3 ubiquitin-protein ligase. PEX2 ubiquitinates PEX5 during its passage through the retrotranslocation channel: catalyzes monoubiquitination of PEX5 at 'Cys-6', a modification that acts as a signal for PEX5 extraction into the cytosol. This is Peroxisome assembly protein 2 from Thermothelomyces thermophilus (strain ATCC 42464 / BCRC 31852 / DSM 1799) (Sporotrichum thermophile).